Consider the following 251-residue polypeptide: Exotoxin type A (251 aa).

A signal peptide spans 1–30; it reads MENNKKVLKKMVFFVLVTFLGLTISQEVFA. An intrachain disulfide couples Cys117 to Cys128.

It belongs to the staphylococcal/streptococcal toxin family.

Its function is as follows. Causative agent of the symptoms associated with scarlet fever, have been associated with streptococcal toxic shock-like disease and may play a role in the early events of rheumatic fever. The chain is Exotoxin type A (speA) from Streptococcus pyogenes serotype M18 (strain MGAS8232).